A 281-amino-acid polypeptide reads, in one-letter code: Cis-2,3-dihydrobiphenyl-2,3-diol dehydrogenase (281 aa).

10–34 (ITGGASGLGRALVDRFVAEGARVAV) contacts NAD(+). Ser142 is a substrate binding site. Tyr155 serves as the catalytic Proton acceptor.

This sequence belongs to the short-chain dehydrogenases/reductases (SDR) family. As to quaternary structure, homotetramer.

The enzyme catalyses (2R,3S)-3-phenylcyclohexa-3,5-diene-1,2-diol + NAD(+) = biphenyl-2,3-diol + NADH + H(+). Its pathway is xenobiotic degradation; biphenyl degradation; 2-hydroxy-2,4-pentadienoate and benzoate from biphenyl: step 2/4. This chain is Cis-2,3-dihydrobiphenyl-2,3-diol dehydrogenase (bphB), found in Comamonas testosteroni (Pseudomonas testosteroni).